The following is a 256-amino-acid chain: Deoxyribose-phosphate aldolase (256 aa).

Aspartate 102 functions as the Proton donor/acceptor in the catalytic mechanism. The active-site Schiff-base intermediate with acetaldehyde is lysine 165. The Proton donor/acceptor role is filled by lysine 197.

This sequence belongs to the DeoC/FbaB aldolase family. DeoC type 2 subfamily.

Its subcellular location is the cytoplasm. It catalyses the reaction 2-deoxy-D-ribose 5-phosphate = D-glyceraldehyde 3-phosphate + acetaldehyde. It participates in carbohydrate degradation; 2-deoxy-D-ribose 1-phosphate degradation; D-glyceraldehyde 3-phosphate and acetaldehyde from 2-deoxy-alpha-D-ribose 1-phosphate: step 2/2. Catalyzes a reversible aldol reaction between acetaldehyde and D-glyceraldehyde 3-phosphate to generate 2-deoxy-D-ribose 5-phosphate. The chain is Deoxyribose-phosphate aldolase from Shewanella sp. (strain W3-18-1).